Here is a 463-residue protein sequence, read N- to C-terminus: Putative ankyrin repeat protein R579 (463 aa).

ANK repeat units follow at residues Leu124 to Ile154, Ser156 to Ile181, Lys242 to Pro271, Ile273 to Pro299, His300 to Glu328, Asn329 to Asp355, Ile356 to Thr385, and Gly387 to Leu416.

The chain is Putative ankyrin repeat protein R579 from Acanthamoeba polyphaga (Amoeba).